The primary structure comprises 513 residues: Coniferin beta-glucosidase (513 aa).

A signal peptide spans 1 to 23; that stretch reads MEVSVLMWVLLFYSLLGFQVTTA. Residues Q44, H145, and 190–191 each bind a beta-D-glucoside; that span reads NE. The Proton donor role is filled by E191. C210 and C219 are joined by a disulfide. An N-linked (GlcNAc...) asparagine glycan is attached at N223. Residues Y336 and E408 each coordinate a beta-D-glucoside. The active-site Nucleophile is E408. The N-linked (GlcNAc...) asparagine glycan is linked to N447. A beta-D-glucoside-binding positions include W457, 464–465, and F473; that span reads EW.

Belongs to the glycosyl hydrolase 1 family. Homodimer. In terms of processing, glycosylated.

It carries out the reaction 4-O-(beta-D-glucosyl)-(E)-coniferol + H2O = (E)-coniferol + D-glucose. Inhibited by glucono-1,5-lactone, but not by bromoconduritol or conduritol B epoxide. Involved in the release of monolignols for lignin biosynthesis. Unable to hydrolyze 4-nitrophenyl beta-cellobioside or alpha-linked methylumbelliferyl glucoside. The sequence is that of Coniferin beta-glucosidase from Pinus contorta (Shore pine).